A 394-amino-acid polypeptide reads, in one-letter code: Elongation factor Tu (394 aa).

Positions 10 to 204 constitute a tr-type G domain; that stretch reads KPHINIGTIG…AVDDNIPTPE (195 aa). The tract at residues 19–26 is G1; sequence GHVDHGKT. Residue 19–26 coordinates GTP; it reads GHVDHGKT. Mg(2+) is bound at residue T26. Residues 60 to 64 form a G2 region; it reads GITIN. The interval 81-84 is G3; the sequence is DCPG. GTP contacts are provided by residues 81-85 and 136-139; these read DCPGH and NKID. A G4 region spans residues 136 to 139; that stretch reads NKID. The interval 174–176 is G5; sequence SAL.

Belongs to the TRAFAC class translation factor GTPase superfamily. Classic translation factor GTPase family. EF-Tu/EF-1A subfamily. As to quaternary structure, monomer.

It is found in the cytoplasm. It carries out the reaction GTP + H2O = GDP + phosphate + H(+). Functionally, GTP hydrolase that promotes the GTP-dependent binding of aminoacyl-tRNA to the A-site of ribosomes during protein biosynthesis. The sequence is that of Elongation factor Tu from Chlamydia abortus (strain DSM 27085 / S26/3) (Chlamydophila abortus).